A 462-amino-acid chain; its full sequence is uncharacterized protein (462 aa).

In terms of domain architecture, TRAM spans 12–70 (MLKKNDIIQVAISDLSHEGAGVAKHDGFVFFVDNALPEEVIDMRVLKVNKNSGFGKVEA). 4 residues coordinate S-adenosyl-L-methionine: Q294, Y323, E344, and D392. C419 (nucleophile) is an active-site residue.

It belongs to the class I-like SAM-binding methyltransferase superfamily. RNA M5U methyltransferase family.

This is an uncharacterized protein from Streptococcus pyogenes serotype M3 (strain ATCC BAA-595 / MGAS315).